The following is a 1226-amino-acid chain: Probable phosphorylase b kinase regulatory subunit alpha (1226 aa).

Residues 666–688 form a disordered region; sequence NEKITTPRGPRTLRRGESVKDRS. Over residues 679-688 the composition is skewed to basic and acidic residues; it reads RRGESVKDRS.

Belongs to the phosphorylase b kinase regulatory chain family.

The protein operates within glycan biosynthesis; glycogen metabolism. Phosphorylase b kinase catalyzes the phosphorylation of serine in certain substrates, including troponin I. The alpha chain may bind calmodulin. The sequence is that of Probable phosphorylase b kinase regulatory subunit alpha from Caenorhabditis elegans.